A 209-amino-acid polypeptide reads, in one-letter code: Large ribosomal subunit protein bL25 (209 aa).

A disordered region spans residues 190–209 (GLKSADDEAEGEDAEEAAAE). Residues 196–209 (DEAEGEDAEEAAAE) show a composition bias toward acidic residues.

This sequence belongs to the bacterial ribosomal protein bL25 family. CTC subfamily. Part of the 50S ribosomal subunit; part of the 5S rRNA/L5/L18/L25 subcomplex. Contacts the 5S rRNA. Binds to the 5S rRNA independently of L5 and L18.

Functionally, this is one of the proteins that binds to the 5S RNA in the ribosome where it forms part of the central protuberance. This is Large ribosomal subunit protein bL25 from Ruegeria sp. (strain TM1040) (Silicibacter sp.).